Consider the following 841-residue polypeptide: Copper-transporting P-type ATPase (841 aa).

Helical transmembrane passes span 186–206, 218–238, 256–276, 285–305, 445–465, and 474–494; these read LWVS…PMLG, ATFI…LPFF, IGLG…APGI, GAAV…VFVG, AVFV…WAAI, and GLLA…GLAT. The active-site 4-aspartylphosphate intermediate is the D530. Transmembrane regions (helical) follow at residues 602 to 622 and 638 to 658; these read GIAD…DLGI and GKTV…AVAD. Mg(2+) is bound by residues D729 and D733. Transmembrane regions (helical) follow at residues 742–762 and 800–820; these read VGIA…ITLV and VAAG…IAAA.

This sequence belongs to the cation transport ATPase (P-type) (TC 3.A.3) family. Type IB subfamily.

It localises to the cell membrane. It carries out the reaction Cu(2+)(in) + ATP + H2O = Cu(2+)(out) + ADP + phosphate + H(+). In terms of biological role, involved in copper efflux. In Rhizobium leguminosarum bv. viciae, this protein is Copper-transporting P-type ATPase (actP).